The chain runs to 168 residues: Putative apoptosis regulator A9 (168 aa).

A helical membrane pass occupies residues Ser-143 to Phe-162.

The protein resides in the host membrane. Functionally, suppresses apoptosis in host cell and thus facilitates production of progeny virions. The protein is Putative apoptosis regulator A9 (A9) of Alcelaphine herpesvirus 1 (strain C500) (AlHV-1).